Here is a 174-residue protein sequence, read N- to C-terminus: ATP-dependent protease subunit HslV (174 aa).

The active site involves Thr2. 3 residues coordinate Na(+): Gly157, Cys160, and Thr163.

Belongs to the peptidase T1B family. HslV subfamily. In terms of assembly, a double ring-shaped homohexamer of HslV is capped on each side by a ring-shaped HslU homohexamer. The assembly of the HslU/HslV complex is dependent on binding of ATP.

It is found in the cytoplasm. It carries out the reaction ATP-dependent cleavage of peptide bonds with broad specificity.. Allosterically activated by HslU binding. Its function is as follows. Protease subunit of a proteasome-like degradation complex believed to be a general protein degrading machinery. In Shewanella woodyi (strain ATCC 51908 / MS32), this protein is ATP-dependent protease subunit HslV.